Here is a 381-residue protein sequence, read N- to C-terminus: Tumor necrosis factor receptor superfamily member 10B (381 aa).

The N-terminal stretch at 1 to 52 (MEPPGPSTPTASAAARADHYTPGLRPLPKRRLLYSFALLLAVLQAVFVPVTA) is a signal peptide. 3 TNFR-Cys repeats span residues 26–86 (PLPK…GNCK), 87–129 (PCRE…NTVC), and 130–169 (RCKPGTFEDKDSPEICQSCSNCTDGEEELTSCTPRENRKC). Topologically, residues 53-180 (NPAHNRPAGL…SKTAWASWHK (128 aa)) are extracellular. Intrachain disulfides connect Cys74–Cys85, Cys88–Cys105, Cys108–Cys121, Cys111–Cys129, Cys131–Cys145, Cys148–Cys161, and Cys151–Cys169. A helical transmembrane segment spans residues 181 to 201 (LGLWIGLLVPVVLLIGALLVW). Topologically, residues 202–381 (KTGAWRQWLL…ETGPGGSQCV (180 aa)) are cytoplasmic. A disordered region spans residues 228–260 (HSSLLDRQTSSTTNDSNHNTEPGKTQKTGKKLL). A compositionally biased stretch (low complexity) spans 236–247 (TSSTTNDSNHNT). The Death domain maps to 273–356 (KFIFEYCSDI…DAMEKIEDYA (84 aa)). A (Microbial infection) N-beta-linked (GlcNAc) arginine glycan is attached at Arg293.

In terms of assembly, monomer. Can interact with TRADD and RIPK1. Three TNFRSF10B molecules interact with the TNFSF10 homotrimer. In the absence of stimulation, interacts with BIRC2, DDX3X and GSK3B. The interaction with BIRC2 and DDX3X is further enhanced upon receptor stimulation and accompanied by DDX3X and BIRC2 cleavage. (Microbial infection) Glycosylated at Arg-293 by S.typhimurium protein Ssek3. In terms of tissue distribution, highly expressed in heart, lung and kidney.

It is found in the membrane. Receptor for the cytotoxic ligand TNFSF10/TRAIL. The adapter molecule FADD recruits caspase-8 to the activated receptor. The resulting death-inducing signaling complex (DISC) performs caspase-8 proteolytic activation which initiates the subsequent cascade of caspases (aspartate-specific cysteine proteases) mediating apoptosis. Promotes the activation of NF-kappa-B. Essential for ER stress-induced apoptosis. This is Tumor necrosis factor receptor superfamily member 10B (Tnfrsf10b) from Mus musculus (Mouse).